The primary structure comprises 714 residues: MARAGSCGGAAAGAGRPEPWELSLEEVLKAYEQPLNEEQAWAVCFQGCRGLRGSPGRRLRDTGDLLLRGDGSVGAREPEAAEPATMVVPLASSEAQTVQSLGFAIYRALDWGLDESEERELSPQLERLIDLMANNDSEDSGCGAADEGYGGPEEEEEAEGVPRSVRTFAQAMRLCAARLTDPRGAQAHYQAVCRALFVETLELRAFLARVREAKEMLQKLREDEPHLETPRAELDSLGHTDWARLWVQLMRELRRGVKLKKVQEQEFNPLPTEFQLTPFEMLMQDIRARNYKLRKVMVDGDIPPRVKKDAHELILDFIRSRPPLKQVSERRLRPLPPKQRSLHEKILEEIKQERRLRPVRGEGWAARGFGSLPCILNACSGDAKSTSCINLSVTDAGGSAQRPRPRVLLKAPTLAEMEEMNTSEEEESPCGEVTLKRDRSFSEHDLAQLRSEVASGLQSATHPPGGTEPPRPRAGSAHVWRPGSRDQGTCPASVSDPSHPLLSNRGSSGDRPEASMTPDAKHLWLEFSHPVESLALTVEEVMDVRRVLVKAEMEKFLQNKELFSSLKKGKICCCCRAKFPLFSWPPSCLFCKRAVCTSCSIKMKMPSKKFGHIPVYTLGFESPQRVSAAKTAPIQRRDIFQSLQGPQWQSVEEAFPHIYSHGCVLKDVCSECTSFVADVVRSSRKSVDVLNTTPRRSRQTQSLYIPNTRTLDFK.

Residues 22-203 (LSLEEVLKAY…RALFVETLEL (182 aa)) form the KIND domain. Positions 136 to 162 (DSEDSGCGAADEGYGGPEEEEEAEGVP) are disordered. WH2 domains are found at residues 248–262 (QLMRELRRGVKLKKV), 278–296 (PFEMLMQDIRARNYKLRKV), and 342–359 (LHEKILEEIKQERRLRPV). 4 positions are modified to phosphoserine: Ser371, Ser440, Ser442, and Ser476. Residues 453-516 (VASGLQSATH…SSGDRPEASM (64 aa)) are disordered. The segment covering 486-496 (DQGTCPASVSD) has biased composition (polar residues). Residues 534–554 (LALTVEEVMDVRRVLVKAEME) are spir-box.

The protein belongs to the spire family.

The protein resides in the cytoplasm. It is found in the cytoskeleton. Its subcellular location is the cytosol. The protein localises to the cell membrane. It localises to the cytoplasmic vesicle membrane. Functionally, acts as an actin nucleation factor, remains associated with the slow-growing pointed end of the new filament. Involved in intracellular vesicle transport along actin fibers, providing a novel link between actin cytoskeleton dynamics and intracellular transport. Required for asymmetric spindle positioning and asymmetric cell division during meiosis. Required for normal formation of the cleavage furrow and for polar body extrusion during female germ cell meiosis. Also acts in the nucleus: together with SPIRE1 and SPIRE2, promotes assembly of nuclear actin filaments in response to DNA damage in order to facilitate movement of chromatin and repair factors after DNA damage. The polypeptide is Protein spire homolog 2 (SPIRE2) (Homo sapiens (Human)).